A 195-amino-acid chain; its full sequence is Imidazoleglycerol-phosphate dehydratase (195 aa).

This sequence belongs to the imidazoleglycerol-phosphate dehydratase family.

The protein resides in the cytoplasm. It carries out the reaction D-erythro-1-(imidazol-4-yl)glycerol 3-phosphate = 3-(imidazol-4-yl)-2-oxopropyl phosphate + H2O. It functions in the pathway amino-acid biosynthesis; L-histidine biosynthesis; L-histidine from 5-phospho-alpha-D-ribose 1-diphosphate: step 6/9. This Cereibacter sphaeroides (strain ATCC 17029 / ATH 2.4.9) (Rhodobacter sphaeroides) protein is Imidazoleglycerol-phosphate dehydratase.